The sequence spans 552 residues: uncharacterized protein (552 aa).

Position 29–36 (29–36) interacts with ATP; sequence GENAWGKS. One can recognise a Toprim domain in the interval 379–469; that stretch reads RCWLLVEGET…AEREHLTALP (91 aa).

This is an uncharacterized protein from Escherichia coli (strain K12).